A 707-amino-acid polypeptide reads, in one-letter code: Protein SGM1 (707 aa).

Residues 1-11 (MSKKLSLEERL) are compositionally biased toward basic and acidic residues. Positions 1–52 (MSKKLSLEERLSLATKKGRKKNKRSTSNLSSPSPVVLSNNEQESARTSIDDA) are disordered. At serine 2 the chain carries N-acetylserine. Residues 27-40 (SNLSSPSPVVLSNN) show a composition bias toward low complexity. Residues 122 to 473 (VEELVKEISP…KPHQENSNEK (352 aa)) adopt a coiled-coil conformation. Serine 151, serine 538, serine 549, serine 568, serine 571, serine 576, and serine 589 each carry phosphoserine. Residues 594–706 (SAHLVNKLST…QQMVEMQGKM (113 aa)) adopt a coiled-coil conformation.

Belongs to the SGM1 family. In terms of assembly, interacts with YPT6.

The protein resides in the golgi apparatus. In terms of biological role, required for normal growth rate on galactose and mannose. The chain is Protein SGM1 (SGM1) from Saccharomyces cerevisiae (strain ATCC 204508 / S288c) (Baker's yeast).